The sequence spans 473 residues: Fumarate hydratase class II (473 aa).

Substrate-binding positions include 105–107 (SGT), 130–133 (HPND), 140–142 (SSN), and Thr-188. Residue His-189 is the Proton donor/acceptor of the active site. Ser-319 is an active-site residue. Substrate is bound by residues Ser-320 and 325–327 (KVN).

This sequence belongs to the class-II fumarase/aspartase family. Fumarase subfamily. In terms of assembly, homotetramer.

Its subcellular location is the cytoplasm. The catalysed reaction is (S)-malate = fumarate + H2O. Its pathway is carbohydrate metabolism; tricarboxylic acid cycle; (S)-malate from fumarate: step 1/1. Involved in the TCA cycle. Catalyzes the stereospecific interconversion of fumarate to L-malate. The chain is Fumarate hydratase class II from Xylella fastidiosa (strain 9a5c).